The sequence spans 503 residues: AMP phosphorylase (503 aa).

Residues Gly168, 194 to 199 (SRAITS), and Thr203 each bind AMP. Asp256 (proton donor) is an active-site residue. Residues Ser264 and Lys288 each coordinate AMP.

It belongs to the thymidine/pyrimidine-nucleoside phosphorylase family. Type 2 subfamily.

The catalysed reaction is AMP + phosphate = alpha-D-ribose 1,5-bisphosphate + adenine. It carries out the reaction CMP + phosphate = cytosine + alpha-D-ribose 1,5-bisphosphate. It catalyses the reaction UMP + phosphate = alpha-D-ribose 1,5-bisphosphate + uracil. Its function is as follows. Catalyzes the conversion of AMP and phosphate to adenine and ribose 1,5-bisphosphate (R15P). Exhibits phosphorylase activity toward CMP and UMP in addition to AMP. Functions in an archaeal AMP degradation pathway, together with R15P isomerase and RubisCO. The protein is AMP phosphorylase of Thermococcus sibiricus (strain DSM 12597 / MM 739).